We begin with the raw amino-acid sequence, 1036 residues long: Histidine kinase 3 (1036 aa).

The Extracellular segment spans residues 1 to 8 (MSLFHVLG). A helical membrane pass occupies residues 9 to 29 (FGVKIGHLFWMLCCWFVSWFV). The Cytoplasmic segment spans residues 30 to 94 (DNGIEDKSGL…VKFNKAWWRK (65 aa)). A helical membrane pass occupies residues 95 to 115 (LVVVWVVFWVLVSIWTFWYFS). The Extracellular segment spans residues 116–399 (SQAMEKRKET…CRFKQKPPWP (284 aa)). In terms of domain architecture, CHASE spans 163-389 (IPSAIDQRTF…GDPLRKHEMR (227 aa)). Residues 400 to 420 (VLSMVTSFGILVIALLVAHII) form a helical membrane-spanning segment. Over 421 to 1036 (HATVSRIHKV…FFNSPSDTES (616 aa)) the chain is Cytoplasmic. The region spanning 457–723 (TVSHEIRTPM…TFTFTAVFSN (267 aa)) is the Histidine kinase domain. At H460 the chain carries Phosphohistidine; by autocatalysis. Response regulatory domains lie at 746 to 865 (KAVV…QRGL) and 891 to 1028 (KILI…SRFF). Residue D941 is modified to 4-aspartylphosphate.

In terms of assembly, interacts with AHK2, AHK4, AHP1, AHP2, AHP3, AHP5 and At5g43560. Autophosphorylated predominantly on His residues. Activation probably requires a transfer of a phosphate group between a His in the transmitter domain and an Asp of the receiver domain. Mostly expressed in leaves and flowers, and, to a lower extent, in roots, stems, and siliques, especially in the vascular tissues. Present in seedlings.

It localises to the cell membrane. The protein localises to the endoplasmic reticulum membrane. It catalyses the reaction ATP + protein L-histidine = ADP + protein N-phospho-L-histidine.. With respect to regulation, activated by cytokinins to initiate phosphorelay signaling. This cytokinin-mediated activation is repressed by the trans-zeatin antagonists 6-(2-hydroxy-3-methylbenzylamino)purine (PI-55) and 6-(2,5-Dihydroxybenzylamino)purine (LGR-991). Cytokinins (CK) receptor related to bacterial two-component regulators. Functions as a histidine kinase and transmits the stress signal to a downstream MAPK cascade. This protein undergoes an ATP-dependent autophosphorylation at a conserved histidine residue in the kinase core, and a phosphoryl group is then transferred to a conserved aspartate residue in the receiver domain. In the presence of cytokinin, feeds phosphate to phosphorelay-integrating histidine phosphotransfer protein (HPt) and activates subsequent cascade. Involved in meristems establishment in seedlings. Redundant negative regulator of drought and salt stress responses and abscisic acid (ABA) signaling. Together with AHK2, plays a negative regulatory role in cold stress signaling via inhibition of ABA response, occurring independently of the cold acclimation pathway. Redundant positive regulator of cytokinin signaling that regulates many developmental processes including seed germination, cell division, seed size, chlorophyll retention during leaf senescence, root repression and shoot promotion. Can interact with isoprenoid-type cytokinins trans-zeatin (tZ and tZR), cis-zeatin (cZ), dihydrozeatin (DZ), buta-2,3-dienyladenine (HA-8), penta-2,3-dienyladenine (HA-1), 4-methyl-penta-2,3-dienyladenine (HA-10), 4-hydroxy-2-butynyladenine (RM1), 2-propynyladenine (RM3), 2-butynyladenine (RM6), and cytokinin ribosides and ribotides. Together with AHK4, involved in the cytokinin-dependent responses to Pi starvation and sucrose stresses. Promotes cytokinin-mediated leaf longevity through a specific phosphorylation of the response regulator ARR2. Involved in alkamides (e.g. N-isobutyl decanamide) and N-acylethanolamides (NAE) signaling that control meristematic activity and differentiation processes during plant development. Contributes to vascular bundle formation and secondary growth in a cytokinin-dependent manner, probably by promoting the maintenance of mitotic activity and/or identity of procambial cells. Plays a role in the cytokinin-mediated repression of the iron uptake pathway. Required by the cytokinin-dependent flower development regulation pathway. This Arabidopsis thaliana (Mouse-ear cress) protein is Histidine kinase 3 (AHK3).